The following is a 146-amino-acid chain: Ribosome-binding factor A (146 aa).

The disordered stretch occupies residues 127–146 (EFAGEADPYKKPEDDEAAES).

The protein belongs to the RbfA family. In terms of assembly, monomer. Binds 30S ribosomal subunits, but not 50S ribosomal subunits or 70S ribosomes.

It localises to the cytoplasm. Its function is as follows. One of several proteins that assist in the late maturation steps of the functional core of the 30S ribosomal subunit. Associates with free 30S ribosomal subunits (but not with 30S subunits that are part of 70S ribosomes or polysomes). Required for efficient processing of 16S rRNA. May interact with the 5'-terminal helix region of 16S rRNA. This Renibacterium salmoninarum (strain ATCC 33209 / DSM 20767 / JCM 11484 / NBRC 15589 / NCIMB 2235) protein is Ribosome-binding factor A.